Consider the following 273-residue polypeptide: Chondrolectin (273 aa).

Positions 1 to 21 are cleaved as a signal peptide; sequence MSRVVSLLLGAALLCGHGAFC. The Extracellular segment spans residues 22–216; the sequence is RRVVSGQKVC…VVTEAGIIPN (195 aa). The C-type lectin domain occupies 35 to 179; that stretch reads FKHPCYKMAY…CNMKHNYICK (145 aa). 2 disulfides stabilise this stretch: Cys-61-Cys-178 and Cys-144-Cys-170. Asn-86 is a glycosylation site (N-linked (GlcNAc...) asparagine). A helical membrane pass occupies residues 217–237; that stretch reads LIYVVIPTIPLLLLILVAFGT. Residues 238 to 273 lie on the Cytoplasmic side of the membrane; sequence CCFQMLHKSKGRTKTSPNQSTLWISKSTRKESGMEV. Positions 248–273 are disordered; sequence GRTKTSPNQSTLWISKSTRKESGMEV. The segment covering 251–263 has biased composition (polar residues); that stretch reads KTSPNQSTLWISK.

As to quaternary structure, interacts with RABGGTB. In terms of processing, N-glycosylated. As to expression, found in spleen, testis, prostate and fetal liver. Expression limited to vascular muscle of testis, smooth muscle of prostate stroma, heart muscle, skeletal muscle, crypts of small intestine, and red pulp of spleen. B lymphocytes express isoform 2 only; peripheral blood T lymphocytes express isoform 3 only; granulocytes and monocytes express neither isoform 2 nor isoform 3. During development of T lymphocytes, bone marrow progenitor cells express isoform 2 only; thymocytes at different stages of maturation express predominantly isoform 2 and weakly isoform 3, and mature thymocytes express only isoform 2.

The protein resides in the cytoplasm. It localises to the membrane. It is found in the endoplasmic reticulum. The protein localises to the endoplasmic reticulum membrane. In terms of biological role, may play a role in the development of the nervous system such as in neurite outgrowth and elongation. May be involved in motor axon growth and guidance. The polypeptide is Chondrolectin (CHODL) (Homo sapiens (Human)).